We begin with the raw amino-acid sequence, 384 residues long: L-type lectin-like domain-containing protein C4F6.05c (384 aa).

An N-terminal signal peptide occupies residues 1–19; it reads MKFCSLFHVLSFCCTLAYA. Positions 20-224 constitute an L-type lectin-like domain; it reads VPKSQFLQLH…DLVALSNLNI (205 aa). Residues 20 to 353 are Extracellular-facing; that stretch reads VPKSQFLQLH…AMGNAYSPYN (334 aa). The interval 227–251 is disordered; sequence PDTSNNENLNPTSNTKQSVGDNTSP. The helical transmembrane segment at 354–374 threads the bilayer; it reads LTNFMVFLLLGAIVSYGIMLV. Over 375–384 the chain is Cytoplasmic; sequence RRDRRRHKYL.

The protein localises to the membrane. It localises to the endoplasmic reticulum. Its subcellular location is the golgi apparatus. In Schizosaccharomyces pombe (strain 972 / ATCC 24843) (Fission yeast), this protein is L-type lectin-like domain-containing protein C4F6.05c.